Consider the following 281-residue polypeptide: UDP-N-acetylenolpyruvoylglucosamine reductase (281 aa).

One can recognise an FAD-binding PCMH-type domain in the interval 17 to 180 (VGGKAKKLII…LSATFKFDNG (164 aa)). R159 is a catalytic residue. S206 serves as the catalytic Proton donor. E276 is an active-site residue.

Belongs to the MurB family. FAD serves as cofactor.

It is found in the cytoplasm. The catalysed reaction is UDP-N-acetyl-alpha-D-muramate + NADP(+) = UDP-N-acetyl-3-O-(1-carboxyvinyl)-alpha-D-glucosamine + NADPH + H(+). The protein operates within cell wall biogenesis; peptidoglycan biosynthesis. Functionally, cell wall formation. In Fusobacterium nucleatum subsp. nucleatum (strain ATCC 25586 / DSM 15643 / BCRC 10681 / CIP 101130 / JCM 8532 / KCTC 2640 / LMG 13131 / VPI 4355), this protein is UDP-N-acetylenolpyruvoylglucosamine reductase.